A 271-amino-acid chain; its full sequence is MTINNGTLQVPGANIHYQVRGSGPIILLVHGGGGDADKFHHVANHLANWYTVVTYDRRGHSRSNLANQIEGYRVETHSDDAHRLLAKITNKPAYVFGSSSGAVIGLDLCIRHPEQVHVMIPHEPILLQLLHGNELKQAEQFMEDLKKNHRSEVIKLMSRLETDEQSKAVLTKRLLGNSTYFTEYEIQGILSYTLDFEALKTVFTSSPMKILPAGGSASRELFPYRCANALAEQLETEWVEFPGNHTGYTMYHKEFSERLHDMLEKEKKHTC.

Residues 24 to 124 (PIILLVHGGG…QVHVMIPHEP (101 aa)) enclose the AB hydrolase-1 domain.

This sequence belongs to the AB hydrolase superfamily.

This is an uncharacterized protein from Bacillus subtilis (strain 168).